We begin with the raw amino-acid sequence, 367 residues long: Zorya protein ZorE (367 aa).

In terms of biological role, component of antiviral defense system Zorya type II, composed of ZorA, ZorB and ZorE. Expression of Zorya type II in E.coli (strain MG1655) confers resistance to phages SECphi7 and T7. While most T7 infected Zorya-containing cells undergo abortive infection, a minority produce viable phage progeny. These eventually accumulate to a high multiplicity of infection, leading to culture collapse by 170 minutes after initial infection. ZorA and ZorB probably assemble in the cell inner membrane and exert their effect there. This may be a nuclease. This is Zorya protein ZorE from Escherichia coli (strain ATCC 8739 / DSM 1576 / NBRC 3972 / NCIMB 8545 / WDCM 00012 / Crooks).